A 603-amino-acid polypeptide reads, in one-letter code: Sulfoacetaldehyde acetyltransferase (603 aa).

This sequence belongs to the TPP enzyme family. Homodimer or homotetramer. Requires Mg(2+) as cofactor. The cofactor is thiamine diphosphate.

Its subcellular location is the cytoplasm. It carries out the reaction acetyl phosphate + sulfite + H(+) = sulfoacetaldehyde + phosphate. The protein operates within organosulfur degradation; taurine degradation via aerobic pathway; acetyl phosphate and sulfite from taurine: step 2/2. In Alcaligenes xylosoxydans xylosoxydans (Achromobacter xylosoxidans), this protein is Sulfoacetaldehyde acetyltransferase (xsc).